A 326-amino-acid chain; its full sequence is 4-hydroxythreonine-4-phosphate dehydrogenase (326 aa).

Positions 134 and 135 each coordinate substrate. A divalent metal cation-binding residues include histidine 164, histidine 209, and histidine 264. Substrate-binding residues include lysine 272, asparagine 281, and arginine 290.

It belongs to the PdxA family. Homodimer. Requires Zn(2+) as cofactor. It depends on Mg(2+) as a cofactor. Co(2+) serves as cofactor.

The protein localises to the cytoplasm. It carries out the reaction 4-(phosphooxy)-L-threonine + NAD(+) = 3-amino-2-oxopropyl phosphate + CO2 + NADH. It participates in cofactor biosynthesis; pyridoxine 5'-phosphate biosynthesis; pyridoxine 5'-phosphate from D-erythrose 4-phosphate: step 4/5. Functionally, catalyzes the NAD(P)-dependent oxidation of 4-(phosphooxy)-L-threonine (HTP) into 2-amino-3-oxo-4-(phosphooxy)butyric acid which spontaneously decarboxylates to form 3-amino-2-oxopropyl phosphate (AHAP). This is 4-hydroxythreonine-4-phosphate dehydrogenase from Colwellia psychrerythraea (strain 34H / ATCC BAA-681) (Vibrio psychroerythus).